A 159-amino-acid chain; its full sequence is Cell division protein SepF (159 aa).

Residues 23-69 (DYIEEDEEQKPASKSAFDSDHTVTPLASTTAPAASSTTKPFPGGRVN) form a disordered region. Residues 44–64 (TVTPLASTTAPAASSTTKPFP) are compositionally biased toward low complexity.

It belongs to the SepF family. As to quaternary structure, homodimer. Interacts with FtsZ.

The protein resides in the cytoplasm. Functionally, cell division protein that is part of the divisome complex and is recruited early to the Z-ring. Probably stimulates Z-ring formation, perhaps through the cross-linking of FtsZ protofilaments. Its function overlaps with FtsA. This Bifidobacterium longum (strain DJO10A) protein is Cell division protein SepF.